The primary structure comprises 447 residues: MRATTGARHLHPPWRRGLRHHRQSTMPPRASRGRLADAALFTAGAVLGSVLLLTLASPFSSSSSPSSGVGSGEVDRLGGGRTFYDDPGVAYTIDRPIVGWDEKRAEWLRAHPELAGGGGERVLMVSGSQPEPCGSPAGDSLLTRLLKNKLDYCRLNGVQLLYNTALLRPSMDRYWAKIPVVRAAMVAHPEAEWVWWVDSDAVLTDMDFRLPLSRYRDHNFVAHGWPHLVYESRSWTSLNAGVFLIRNCQWSLDFMDAWAAMGPDSPEYQHWGAVLTSTFKDKVFNESDDQSALVYMLLQSGSPWRDKVYLESDYYFEGYWLEIAGRLGNITERYEAMERGAAPLRRRHAEAEHASYAAARDAALAGAGLAESGVSGWRRPFVTHFTGCQPCSGHRNEHYTGKSCDEGIRRALSFADDQVLRAYGFRHAGPLSDAVSPLPFDHPTQTA.

The interval 1–31 is disordered; that stretch reads MRATTGARHLHPPWRRGLRHHRQSTMPPRAS. Over 1-37 the chain is Cytoplasmic; it reads MRATTGARHLHPPWRRGLRHHRQSTMPPRASRGRLAD. The segment covering 8-23 has biased composition (basic residues); sequence RHLHPPWRRGLRHHRQ. The helical; Signal-anchor for type II membrane protein transmembrane segment at 38 to 60 threads the bilayer; that stretch reads AALFTAGAVLGSVLLLTLASPFS. At 61 to 447 the chain is on the lumenal side; it reads SSSSPSSGVG…LPFDHPTQTA (387 aa). Asparagine 285 and asparagine 329 each carry an N-linked (GlcNAc...) asparagine glycan.

The protein belongs to the glycosyltransferase 34 family.

It is found in the golgi apparatus membrane. Probable glycosyltransferase that may be involved in the biosynthesis of xyloglucan. This is Probable glycosyltransferase 7 from Oryza sativa subsp. indica (Rice).